Reading from the N-terminus, the 231-residue chain is Dihydropteridine reductase (231 aa).

6–30 (LVLGGSGALGAEVVKFFKSKSWNTI) contributes to the NADP(+) binding site. Tyrosine 138 acts as the Proton acceptor in catalysis.

Belongs to the short-chain dehydrogenases/reductases (SDR) family. In terms of assembly, homodimer.

It carries out the reaction 5,6,7,8-tetrahydropteridine + NAD(+) = 6,7-dihydropteridine + NADH + H(+). The catalysed reaction is 5,6,7,8-tetrahydropteridine + NADP(+) = 6,7-dihydropteridine + NADPH + H(+). The product of this enzyme, tetrahydrobiopterin (BH-4), is an essential cofactor for phenylalanine, tyrosine, and tryptophan hydroxylases. This Dictyostelium discoideum (Social amoeba) protein is Dihydropteridine reductase (qdpr).